The following is a 98-amino-acid chain: Large ribosomal subunit protein uL23 (98 aa).

Belongs to the universal ribosomal protein uL23 family. In terms of assembly, part of the 50S ribosomal subunit. Contacts protein L29, and trigger factor when it is bound to the ribosome.

Functionally, one of the early assembly proteins it binds 23S rRNA. One of the proteins that surrounds the polypeptide exit tunnel on the outside of the ribosome. Forms the main docking site for trigger factor binding to the ribosome. This chain is Large ribosomal subunit protein uL23, found in Clostridium botulinum (strain Eklund 17B / Type B).